A 1898-amino-acid chain; its full sequence is Receptor-type tyrosine-protein phosphatase F (1898 aa).

The first 29 residues, 1–29 (MAPEPAPGRRMVPLVPALVMLGLMAGAHG), serve as a signal peptide directing secretion. The Extracellular segment spans residues 30–1254 (DSKPVFVKVP…QQQEEPEMLW (1225 aa)). Ig-like C2-type domains lie at 33–123 (PVFV…AKLS), 135–224 (PTID…ANLY), and 232–314 (PRFS…AQVT). Cysteines 54 and 107 form a disulfide. Residue 68-77 (KKGKKVSSQR) participates in heparin binding. Asn117 carries N-linked (GlcNAc...) asparagine glycosylation. An intrachain disulfide couples Cys156 to Cys207. N-linked (GlcNAc...) asparagine glycosylation is found at Asn250 and Asn295. Residues Cys253 and Cys298 are joined by a disulfide bond. 8 Fibronectin type-III domains span residues 321–411 (PPID…TGEQ), 416–510 (PPRR…TQQG), 514–604 (QPAD…TAQS), 609–706 (PPQK…TDED), 711–810 (PPRK…TTGA), 811–904 (VPGR…TPED), 909–1001 (FPQN…TMPV), and 1005–1089 (FAKN…TAPD). The tract at residues 693-712 (GPESSPVLVRTDEDVPSGPP) is disordered. A glycan (N-linked (GlcNAc...) asparagine) is linked at Asn721. N-linked (GlcNAc...) asparagine glycans are attached at residues Asn941, Asn957, and Asn960. The helical transmembrane segment at 1255-1275 (VTGPVLAVILIILIVIAILLF) threads the bilayer. At 1276–1898 (KRKRTHSPSS…YLGSFDHYAT (623 aa)) the chain is on the cytoplasmic side. Phosphoserine is present on Ser1296. Tyrosine-protein phosphatase domains are found at residues 1343 to 1598 (FSQE…LLEA) and 1630 to 1889 (MELE…ALEY). Substrate-binding positions include Asp1507, 1539-1545 (CSAGVGR), and Gln1583. The Phosphocysteine intermediate role is filled by Cys1539. The active-site Phosphocysteine intermediate is the Cys1830.

This sequence belongs to the protein-tyrosine phosphatase family. Receptor class 2A subfamily. As to quaternary structure, interacts with GRIP1. Interacts with PPFIA1, PPFIA2 and PPFIA3. Interacts with PTPRF. Expressed in the cell of the T lineage but not in cells of any other hemopoietic lineage.

It is found in the membrane. It catalyses the reaction O-phospho-L-tyrosyl-[protein] + H2O = L-tyrosyl-[protein] + phosphate. Functionally, possible cell adhesion receptor. It possesses an intrinsic protein tyrosine phosphatase activity (PTPase) and dephosphorylates EPHA2 regulating its activity. This is Receptor-type tyrosine-protein phosphatase F (Ptprf) from Mus musculus (Mouse).